The primary structure comprises 491 residues: Keratin, type I cytoskeletal 39 (491 aa).

A head region spans residues 1-96; it reads MDTKGCTTTN…WYGEGINSNE (96 aa). The IF rod domain occupies 96–407; it reads EKETMQILNE…SLLESSDGKR (312 aa). The coil 1A stretch occupies residues 97–131; the sequence is KETMQILNERLANYLQKVRMLERENAELESKIQEE. Positions 132 to 142 are linker 1; that stretch reads SNKELPVLCPD. The coil 1B stretch occupies residues 143–243; that stretch reads YLSYYTTIEE…HKEEINSLQC (101 aa). The segment at 244-259 is linker 12; that stretch reads QLGERLDIEVTAAPSA. The coil 2 stretch occupies residues 260-403; it reads DLNQVLQEMR…TTYRSLLESS (144 aa). Positions 404–491 are tail; that stretch reads DGKRPCYPRA…PCFIIRPAKV (88 aa).

The protein belongs to the intermediate filament family. In terms of assembly, heterotetramer of two type I and two type II keratins. Expressed in skin and scalp. In the hair follicle, it is present in the upper hair cuticle and the upper cortex. Also present in the in the upper portion of beard hairs (at protein level).

Functionally, may play a role in late hair differentiation. In Homo sapiens (Human), this protein is Keratin, type I cytoskeletal 39 (KRT39).